The chain runs to 470 residues: Aldehyde dehydrogenase family 3 comG (470 aa).

NAD(+) is bound at residue 196-201 (GSVKVG). Residues Glu218 and Cys252 contribute to the active site.

It belongs to the aldehyde dehydrogenase family.

The protein resides in the cytoplasm. The enzyme catalyses an aldehyde + NADP(+) + H2O = a carboxylate + NADPH + 2 H(+). The catalysed reaction is an aldehyde + NAD(+) + H2O = a carboxylate + NADH + 2 H(+). This is Aldehyde dehydrogenase family 3 comG (comG) from Dictyostelium discoideum (Social amoeba).